The primary structure comprises 376 residues: Queuine tRNA-ribosyltransferase (376 aa).

Aspartate 89 serves as the catalytic Proton acceptor. Substrate contacts are provided by residues 89 to 93 (DSGGF), aspartate 143, glutamine 194, and glycine 221. The segment at 252 to 258 (GVGTPSN) is RNA binding. The Nucleophile role is filled by aspartate 271. The segment at 276-280 (ARNGR) is RNA binding; important for wobble base 34 recognition. Zn(2+) contacts are provided by cysteine 309, cysteine 311, cysteine 314, and histidine 340.

This sequence belongs to the queuine tRNA-ribosyltransferase family. As to quaternary structure, homodimer. Within each dimer, one monomer is responsible for RNA recognition and catalysis, while the other monomer binds to the replacement base PreQ1. Zn(2+) is required as a cofactor.

It carries out the reaction 7-aminomethyl-7-carbaguanine + guanosine(34) in tRNA = 7-aminomethyl-7-carbaguanosine(34) in tRNA + guanine. The protein operates within tRNA modification; tRNA-queuosine biosynthesis. In terms of biological role, catalyzes the base-exchange of a guanine (G) residue with the queuine precursor 7-aminomethyl-7-deazaguanine (PreQ1) at position 34 (anticodon wobble position) in tRNAs with GU(N) anticodons (tRNA-Asp, -Asn, -His and -Tyr). Catalysis occurs through a double-displacement mechanism. The nucleophile active site attacks the C1' of nucleotide 34 to detach the guanine base from the RNA, forming a covalent enzyme-RNA intermediate. The proton acceptor active site deprotonates the incoming PreQ1, allowing a nucleophilic attack on the C1' of the ribose to form the product. After dissociation, two additional enzymatic reactions on the tRNA convert PreQ1 to queuine (Q), resulting in the hypermodified nucleoside queuosine (7-(((4,5-cis-dihydroxy-2-cyclopenten-1-yl)amino)methyl)-7-deazaguanosine). The polypeptide is Queuine tRNA-ribosyltransferase (Clostridium acetobutylicum (strain ATCC 824 / DSM 792 / JCM 1419 / IAM 19013 / LMG 5710 / NBRC 13948 / NRRL B-527 / VKM B-1787 / 2291 / W)).